Reading from the N-terminus, the 186-residue chain is MSDKFDVNELKRRMQGAAQSLKHELGGLRTGRASASMLEPVQVDAYGSHMPLNQVATVSVPEPRLISVQVWDKSMVKAVEKGIVDSNLGLSPATEGQVIRLRIPELNEERRKELVKVAHKYAEAARVAVRHVRRDGLDTIKKLEKAHEISEDDQKRLDQEVQKATDAAIAEIDQLLANKEKEILTV.

This sequence belongs to the RRF family.

It localises to the cytoplasm. In terms of biological role, responsible for the release of ribosomes from messenger RNA at the termination of protein biosynthesis. May increase the efficiency of translation by recycling ribosomes from one round of translation to another. The protein is Ribosome-recycling factor of Rhodopseudomonas palustris (strain ATCC BAA-98 / CGA009).